The following is a 365-amino-acid chain: uncharacterized protein (365 aa).

Disordered regions lie at residues glutamine 218–alanine 262 and proline 315–cysteine 342. Basic and acidic residues-rich tracts occupy residues proline 239–glutamate 257 and methionine 331–proline 341.

This is an uncharacterized protein from Mus musculus (Mouse).